Consider the following 146-residue polypeptide: Large ribosomal subunit protein bL17 (146 aa).

The interval 118 to 146 (RDPAAKGQDSGPKPEVASDEDEAGEAAAA) is disordered. Residues 134-146 (ASDEDEAGEAAAA) are compositionally biased toward acidic residues.

It belongs to the bacterial ribosomal protein bL17 family. In terms of assembly, part of the 50S ribosomal subunit. Contacts protein L32.

The polypeptide is Large ribosomal subunit protein bL17 (Acidiphilium cryptum (strain JF-5)).